We begin with the raw amino-acid sequence, 642 residues long: RNA polymerase sigma factor RpoD (642 aa).

Residues 199 to 228 form a disordered region; the sequence is HLETTAPEKPSNDNSDENEDDEESEEDADE. A compositionally biased stretch (acidic residues) spans 212–228; it reads NSDENEDDEESEEDADE. The segment at 403–473 is sigma-70 factor domain-2; sequence MIQANLRLVI…TRSIADQART (71 aa). An Interaction with polymerase core subunit RpoC motif is present at residues 427-430; it reads DLIQ. The segment at 482–558 is sigma-70 factor domain-3; sequence ETINKMNRIS…DANNVAPADA (77 aa). A sigma-70 factor domain-4 region spans residues 571-624; sequence ILESLTPREAKVLRMRFGIDMNTDHTLEEVGRQFDVTRERIRQIEAKALRKLRH. A DNA-binding region (H-T-H motif) is located at residues 597 to 616; sequence LEEVGRQFDVTRERIRQIEA.

The protein belongs to the sigma-70 factor family. RpoD/SigA subfamily. As to quaternary structure, interacts transiently with the RNA polymerase catalytic core.

It localises to the cytoplasm. Functionally, sigma factors are initiation factors that promote the attachment of RNA polymerase to specific initiation sites and are then released. This sigma factor is the primary sigma factor during exponential growth. This chain is RNA polymerase sigma factor RpoD, found in Neisseria gonorrhoeae.